We begin with the raw amino-acid sequence, 184 residues long: GTPase RhebL1 (184 aa).

GTP is bound by residues 16–21 (SVGKTS), 32–38 (LEGYDPT), G63, 119–122 (NKAD), and 149–150 (SA). The Effector region motif lies at 35 to 43 (YDPTVENTY). A Mg(2+)-binding site is contributed by T38. The residue at position 181 (C181) is a Cysteine methyl ester. A lipid anchor (S-farnesyl cysteine) is attached at C181. The propeptide at 182-184 (YLM) is removed in mature form.

The protein belongs to the small GTPase superfamily. Rheb family. In terms of assembly, interacts with MTOR.

It is found in the endomembrane system. It localises to the cytoplasm. It catalyses the reaction GTP + H2O = GDP + phosphate + H(+). Binds GTP and exhibits intrinsic GTPase activity. May activate NF-kappa-B-mediated gene transcription. Promotes signal transduction through MTOR, activates RPS6KB1, and is a downstream target of the small GTPase-activating proteins TSC1 and TSC2. This is GTPase RhebL1 (Rhebl1) from Mus musculus (Mouse).